A 107-amino-acid polypeptide reads, in one-letter code: MTSKTVTRADLASVVCKKVGLSHTESAALVELVLDEICNSLVRGEAVKLSSFATFQVRSKNERIGRNPKTGVEAPIPPRRVVTFKAANILKQRILDSHRAKQKKDLL.

The protein belongs to the bacterial histone-like protein family. Heterodimer of an alpha and a beta chain.

Its function is as follows. This protein is one of the two subunits of integration host factor, a specific DNA-binding protein that functions in genetic recombination as well as in transcriptional and translational control. The sequence is that of Integration host factor subunit alpha from Bartonella tribocorum (strain CIP 105476 / IBS 506).